Here is a 188-residue protein sequence, read N- to C-terminus: Elongation factor P (188 aa).

The protein belongs to the elongation factor P family.

The protein resides in the cytoplasm. It participates in protein biosynthesis; polypeptide chain elongation. Functionally, involved in peptide bond synthesis. Stimulates efficient translation and peptide-bond synthesis on native or reconstituted 70S ribosomes in vitro. Probably functions indirectly by altering the affinity of the ribosome for aminoacyl-tRNA, thus increasing their reactivity as acceptors for peptidyl transferase. This Wolbachia pipientis wMel protein is Elongation factor P.